Reading from the N-terminus, the 556-residue chain is MSSQFVYTMHRVGKVVPPKRHILKDISLSFFPGAKIGVLGLNGAGKSTLLRIMAGVDKEFEGEARPQPGIKIGYLPQEPKLEPQQTVREAVEEAVSEVKNALTRLDEVYALYADPDADFDKLAAEQANLEAIIQAHDGHNLDNQLERAADALRLPDWDAKIEHLSGGERRRVALCRLLLEKPDMLLLDEPTNHLDAESVAWLERFLHDYEGTVVAITHDRYFLDNVAGWILELDRGEGIPWEGNYSSWLEQKEKRLEQEQATENARQKSIAKELEWVRQNPKGRQAKSKARMARFDELNSGEYQKRNETNELFIPPGPRLGDKVIEVQNLTKSYGDRTLIDDLSFSIPKGAIVGIIGANGAGKSTLFRMLSGQEQPDSGSVTMGETVVLASVDQFRDSMDDKKTVWEEVSNGQDILTIGNFEIPSRAYVGRFNFKGVDQQKRVGELSGGERGRLHLAKLLQRGGNVLLLDEPTNDLDVETLRALENAILEFPGCAMVISHDRWFLDRIATHILDYGDEGKVTFYEGNFSDYEEWKKKTLGDAATQPHRIKYKRIAK.

ABC transporter domains lie at 7-260 (YTMH…EQEQ) and 325-551 (IEVQ…RIKY). Position 40 to 47 (40 to 47 (GLNGAGKS)) interacts with ATP. Residues 96 to 140 (SEVKNALTRLDEVYALYADPDADFDKLAAEQANLEAIIQAHDGHN) are arm. Residues 243–323 (GNYSSWLEQK…IPPGPRLGDK (81 aa)) form a ptIM region. 357 to 364 (GANGAGKS) provides a ligand contact to ATP.

The protein belongs to the ABC transporter superfamily. ABCF family. Translational throttle EttA subfamily. In terms of assembly, monomer. Probably contacts ribosomal proteins L1, L5, L33 and S7, the 16S and 23S rRNA and the P-site containing tRNA(fMet).

The protein localises to the cytoplasm. The catalysed reaction is ATP + H2O = ADP + phosphate + H(+). Its function is as follows. A translation factor that gates the progression of the 70S ribosomal initiation complex (IC, containing tRNA(fMet) in the P-site) into the translation elongation cycle by using a mechanism sensitive to the ATP/ADP ratio. Binds to the 70S ribosome E-site where it modulates the state of the translating ribosome during subunit translocation. ATP hydrolysis probably frees it from the ribosome, which can enter the elongation phase. The protein is Energy-dependent translational throttle protein EttA of Haemophilus influenzae (strain ATCC 51907 / DSM 11121 / KW20 / Rd).